A 403-amino-acid polypeptide reads, in one-letter code: Argininosuccinate synthase (403 aa).

8 to 16 (AYSGGLDTS) is a binding site for ATP. L-citrulline is bound at residue Tyr-87. Residue Gly-117 coordinates ATP. 3 residues coordinate L-aspartate: Thr-119, Asn-123, and Asp-124. Asn-123 provides a ligand contact to L-citrulline. The L-citrulline site is built by Arg-127, Ser-175, Glu-259, and Tyr-271.

Belongs to the argininosuccinate synthase family. Type 1 subfamily. Homotetramer.

It is found in the cytoplasm. The catalysed reaction is L-citrulline + L-aspartate + ATP = 2-(N(omega)-L-arginino)succinate + AMP + diphosphate + H(+). Its pathway is amino-acid biosynthesis; L-arginine biosynthesis; L-arginine from L-ornithine and carbamoyl phosphate: step 2/3. This is Argininosuccinate synthase from Salinispora arenicola (strain CNS-205).